We begin with the raw amino-acid sequence, 295 residues long: Oxidoreductase AN1597 (295 aa).

The protein belongs to the asaB hydroxylase/desaturase family.

Its pathway is secondary metabolite biosynthesis; terpenoid biosynthesis. In terms of biological role, oxidoreductase; part of the gene cluster that mediates the biosynthesis of the diterpene ent-pimara-8(14),15-diene (PD). Within the cluster, the HMG-CoA reductase AN1593 functions in the mevalonate pathway, which produces isoprenoid precursors. The geranylgeranyl pyrophosphate (GGPP) synthase AN1592 is needed in the formation of GGPP, the precursor for diterpenes. Lastly, the pimaradiene synthase pbcA performs the 2 cyclization steps that convert GGPP to ent-pimara-8(14),15-diene. The putative roles of the remaining cluster enzymes in ent-pimara-8(14),15-diene biosynthesis is unclear. The cytochrome P450 monooxygenase AN1598, the glutathione S-transferase AN1595, the oxidoreductases AN1596 and AN1597 probably function as decorative enzymes. It is possible that in biological conditions the compound is oxidized to ent-pimara-8(14),15-dien-19-oic acid, which is a bioactive diterpene compound predominant in many plant extracts. The polypeptide is Oxidoreductase AN1597 (Emericella nidulans (strain FGSC A4 / ATCC 38163 / CBS 112.46 / NRRL 194 / M139) (Aspergillus nidulans)).